A 117-amino-acid chain; its full sequence is UPF0102 protein Rsph17025_0472 (117 aa).

Belongs to the UPF0102 family.

The protein is UPF0102 protein Rsph17025_0472 of Cereibacter sphaeroides (strain ATCC 17025 / ATH 2.4.3) (Rhodobacter sphaeroides).